A 381-amino-acid polypeptide reads, in one-letter code: Alkanesulfonate monooxygenase (381 aa).

This sequence belongs to the SsuD family. As to quaternary structure, homotetramer.

The catalysed reaction is an alkanesulfonate + FMNH2 + O2 = an aldehyde + FMN + sulfite + H2O + 2 H(+). In terms of biological role, catalyzes the desulfonation of aliphatic sulfonates. This chain is Alkanesulfonate monooxygenase, found in Shigella flexneri.